Here is a 250-residue protein sequence, read N- to C-terminus: 23S rRNA (guanosine-2'-O-)-methyltransferase RlmB (250 aa).

Residues Gly-198, Ile-218, and Leu-227 each contribute to the S-adenosyl-L-methionine site.

This sequence belongs to the class IV-like SAM-binding methyltransferase superfamily. RNA methyltransferase TrmH family. RlmB subfamily.

Its subcellular location is the cytoplasm. It catalyses the reaction guanosine(2251) in 23S rRNA + S-adenosyl-L-methionine = 2'-O-methylguanosine(2251) in 23S rRNA + S-adenosyl-L-homocysteine + H(+). Its function is as follows. Specifically methylates the ribose of guanosine 2251 in 23S rRNA. The polypeptide is 23S rRNA (guanosine-2'-O-)-methyltransferase RlmB (Coxiella burnetii (strain RSA 493 / Nine Mile phase I)).